Here is a 644-residue protein sequence, read N- to C-terminus: Protein DA1-related 6 (644 aa).

UIM domains lie at 119-138, 181-200, and 244-263; these read EEDE…NNRR, DVDE…KGKG, and DEDE…KGQI. One can recognise an LIM zinc-binding domain in the interval 284-355; the sequence is SLCGGCNFAV…YVCKEKKMKT (72 aa). Residues 572–589 are compositionally biased toward low complexity; the sequence is ASSSASSSSRTPPAASAS. The tract at residues 572-591 is disordered; the sequence is ASSSASSSSRTPPAASASKK.

In terms of assembly, interacts with ubiquitin.

Its function is as follows. Ubiquitin receptor that probably regulates developmental process. The polypeptide is Protein DA1-related 6 (DAR6) (Arabidopsis thaliana (Mouse-ear cress)).